The chain runs to 326 residues: MELIDSFGRRINYLRLSVTDRCNLRCSYCMPAEGVEKLAHGDILSYEDLFRIARAAVAIGIEKIRITGGEPLVRKGIVPFLARIAAIEGLRQLVLTTNGLLLPEMAADLRSAGVQRLNISLDSLRADTFRAITRIGELQRVLDGIAAADAAGFPPPKINMVVMRGVNDGEVADFARLTIDRPCTVRFIEYMPATRENNWQSLTVPGREILDRISASYELEPVEKGACAGPSRDFRIRGAAGTLGVITAVSGHFCGDCNRVRVTSTGMAKSCLFSDEGFDLRPFLETSDPIILQEALRRIVGVKPERHGMSACKAEHQAFSMAKIGG.

The 215-residue stretch at 6-220 (SFGRRINYLR…DRISASYELE (215 aa)) folds into the Radical SAM core domain. Arginine 15 provides a ligand contact to GTP. [4Fe-4S] cluster contacts are provided by cysteine 22 and cysteine 26. Residue tyrosine 28 participates in S-adenosyl-L-methionine binding. Cysteine 29 provides a ligand contact to [4Fe-4S] cluster. Residue arginine 65 coordinates GTP. Glycine 69 is a binding site for S-adenosyl-L-methionine. Threonine 96 is a binding site for GTP. S-adenosyl-L-methionine is bound at residue serine 120. Position 157 (lysine 157) interacts with GTP. Methionine 191 provides a ligand contact to S-adenosyl-L-methionine. [4Fe-4S] cluster contacts are provided by cysteine 254 and cysteine 257. 259–261 (RVR) contacts GTP. Residue cysteine 271 participates in [4Fe-4S] cluster binding.

It belongs to the radical SAM superfamily. MoaA family. Monomer and homodimer. [4Fe-4S] cluster serves as cofactor.

The enzyme catalyses GTP + AH2 + S-adenosyl-L-methionine = (8S)-3',8-cyclo-7,8-dihydroguanosine 5'-triphosphate + 5'-deoxyadenosine + L-methionine + A + H(+). It functions in the pathway cofactor biosynthesis; molybdopterin biosynthesis. Functionally, catalyzes the cyclization of GTP to (8S)-3',8-cyclo-7,8-dihydroguanosine 5'-triphosphate. This is GTP 3',8-cyclase from Geobacter sulfurreducens (strain ATCC 51573 / DSM 12127 / PCA).